Reading from the N-terminus, the 184-residue chain is Trichothecene 15-O-acetyltransferase SAT16 (184 aa).

A substrate-binding site is contributed by His154.

It belongs to the trichothecene O-acetyltransferase family.

The protein operates within mycotoxin biosynthesis. Its function is as follows. Trichothecene 15-O-acetyltransferase; part of the satratoxin SC2 cluster involved in the biosynthesis of satratoxins, trichothecene mycotoxins that are associated with human food poisonings. Satratoxins are suggested to be made by products of multiple gene clusters (SC1, SC2 and SC3) that encode 21 proteins in all, including polyketide synthases, acetyltransferases, and other enzymes expected to modify the trichothecene skeleton. SC1 encodes 10 proteins, SAT1 to SAT10. The largest are SAT8, which encodes a putative polyketide synthase (PKS) with a conventional non-reducing architecture, and SAT10, a putative protein containing four ankyrin repeats and thus may be involved in protein scaffolding. The putative short-chain reductase SAT3 may assist the PKS in some capacity. SAT6 contains a secretory lipase domain and acts probably as a trichothecene esterase. SAT5 encodes a putative acetyltransferase, and so, with SAT6, may affect endogenous protection from toxicity. The probable transcription factor SAT9 may regulate the expression of the SC1 cluster. SC2 encodes proteins SAT11 to SAT16, the largest of which encodes the putative reducing PKS SAT13. SAT11 is a cytochrome P450 monooxygenase, while SAT14 and SAT16 are probable acetyltransferases. The SC2 cluster may be regulated by the transcription factor SAT15. SC3 is a small cluster that encodes 5 proteins, SAT17 to SAT21. SAT21 is a putative MFS-type transporter which may have a role in exporting secondary metabolites. The four other proteins putatively encoded in SC3 include the taurine hydroxylase-like protein SAT17, the O-methyltransferase SAT18, the acetyltransferase SAT19, and the Cys6-type zinc finger SAT20, the latter being probably involved in regulation of SC3 expression. This is Trichothecene 15-O-acetyltransferase SAT16 from Stachybotrys chartarum (strain CBS 109288 / IBT 7711) (Toxic black mold).